Consider the following 461-residue polypeptide: Argininosuccinate lyase (461 aa).

3 residues coordinate 2-(N(omega)-L-arginino)succinate: S28, N115, and T160. H161 (proton acceptor) is an active-site residue. The active-site Proton donor is the S282. 2-(N(omega)-L-arginino)succinate is bound by residues N290, Y322, Q327, and K330.

Belongs to the lyase 1 family. Argininosuccinate lyase subfamily. Homotetramer.

The catalysed reaction is 2-(N(omega)-L-arginino)succinate = fumarate + L-arginine. It functions in the pathway amino-acid biosynthesis; L-arginine biosynthesis; L-arginine from L-ornithine and carbamoyl phosphate: step 3/3. The chain is Argininosuccinate lyase (arg7) from Schizosaccharomyces pombe (strain 972 / ATCC 24843) (Fission yeast).